Reading from the N-terminus, the 190-residue chain is Potassium-transporting ATPase KdpC subunit (190 aa).

Residues 10 to 30 (LLVFLTILTGGVYPLATTVLG) form a helical membrane-spanning segment.

The protein belongs to the KdpC family. The system is composed of three essential subunits: KdpA, KdpB and KdpC.

The protein localises to the cell inner membrane. In terms of biological role, part of the high-affinity ATP-driven potassium transport (or Kdp) system, which catalyzes the hydrolysis of ATP coupled with the electrogenic transport of potassium into the cytoplasm. This subunit acts as a catalytic chaperone that increases the ATP-binding affinity of the ATP-hydrolyzing subunit KdpB by the formation of a transient KdpB/KdpC/ATP ternary complex. This Cronobacter sakazakii (strain ATCC BAA-894) (Enterobacter sakazakii) protein is Potassium-transporting ATPase KdpC subunit.